Reading from the N-terminus, the 307-residue chain is D-alanine--D-alanine ligase (307 aa).

One can recognise an ATP-grasp domain in the interval 101–301 (KTVMRAAGVS…FGELVRWMVE (201 aa)). 127-182 (PLTPPYVVKPIAEGSSMGVIIVREERSHPPQILASDEWVYGEEVLAETYIAGRELT) contacts ATP. Residues Asp-251, Glu-268, and Asn-270 each contribute to the Mg(2+) site.

Belongs to the D-alanine--D-alanine ligase family. Mg(2+) serves as cofactor. Requires Mn(2+) as cofactor.

It localises to the cytoplasm. The enzyme catalyses 2 D-alanine + ATP = D-alanyl-D-alanine + ADP + phosphate + H(+). It participates in cell wall biogenesis; peptidoglycan biosynthesis. Its function is as follows. Cell wall formation. In Methylorubrum populi (strain ATCC BAA-705 / NCIMB 13946 / BJ001) (Methylobacterium populi), this protein is D-alanine--D-alanine ligase.